The sequence spans 206 residues: ATP-dependent Clp protease proteolytic subunit (206 aa).

Ser-110 acts as the Nucleophile in catalysis. His-135 is an active-site residue.

It belongs to the peptidase S14 family. Fourteen ClpP subunits assemble into 2 heptameric rings which stack back to back to give a disk-like structure with a central cavity, resembling the structure of eukaryotic proteasomes.

It is found in the cytoplasm. It carries out the reaction Hydrolysis of proteins to small peptides in the presence of ATP and magnesium. alpha-casein is the usual test substrate. In the absence of ATP, only oligopeptides shorter than five residues are hydrolyzed (such as succinyl-Leu-Tyr-|-NHMec, and Leu-Tyr-Leu-|-Tyr-Trp, in which cleavage of the -Tyr-|-Leu- and -Tyr-|-Trp bonds also occurs).. Its function is as follows. Cleaves peptides in various proteins in a process that requires ATP hydrolysis. Has a chymotrypsin-like activity. Plays a major role in the degradation of misfolded proteins. This is ATP-dependent Clp protease proteolytic subunit from Edwardsiella ictaluri (strain 93-146).